Reading from the N-terminus, the 261-residue chain is Sugar fermentation stimulation protein homolog (261 aa).

A disordered region spans residues 1–23; the sequence is MTDSAKPQNPDPGHESRRVAPLA.

The protein belongs to the SfsA family.

This Syntrophobacter fumaroxidans (strain DSM 10017 / MPOB) protein is Sugar fermentation stimulation protein homolog.